An 856-amino-acid polypeptide reads, in one-letter code: Increased rDNA silencing protein 4 (856 aa).

Disordered stretches follow at residues 1–204 (MSAS…EPKS), 230–563 (KQEE…PTPE), and 589–672 (TSLE…DEDL). 3 stretches are compositionally biased toward low complexity: residues 12–42 (GPAS…ATLA), 67–84 (VPTP…RTVG), and 111–130 (SRVV…AGRT). Basic and acidic residues predominate over residues 152–162 (HVEERANDHAP). Positions 194 to 204 (ASAKPSSEPKS) are enriched in low complexity. Residues 239-254 (KKKKKKKPRPASKTQH) show a composition bias toward basic residues. Composition is skewed to polar residues over residues 255–275 (HQTL…ENQC) and 303–315 (SLST…SSTG). A compositionally biased stretch (basic and acidic residues) spans 329–347 (GETRNRNGDVRDKPSREGG). Polar residues-rich tracts occupy residues 396-410 (PVSQ…TIIS), 451-468 (RVVS…QSAE), and 478-488 (RNSTSSDETFV). Basic and acidic residues predominate over residues 503 to 514 (KELERVRPRLDR). Positions 517–535 (TSTSSRASRVSTPASVRSP) are enriched in low complexity. Positions 603–620 (RRGHRHHHLPHPHLRHRT) are enriched in basic residues. Residues 644 to 654 (PSRQTEHTQPA) show a composition bias toward polar residues. An EH domain is found at 743-832 (DSLGQVDLSR…EGVWESAMDR (90 aa)).

Belongs to the IRS4 family.

Its function is as follows. Positive regulator of phosphatidylinositol 4,5-bisphosphate turnover and negatively regulates signaling through the cell integrity pathway. Involved in rDNA silencing. The protein is Increased rDNA silencing protein 4 (irs-4) of Neurospora crassa (strain ATCC 24698 / 74-OR23-1A / CBS 708.71 / DSM 1257 / FGSC 987).